A 241-amino-acid polypeptide reads, in one-letter code: Triosephosphate isomerase (241 aa).

9–11 is a substrate binding site; that stretch reads NWK. Catalysis depends on His96, which acts as the Electrophile. The Proton acceptor role is filled by Glu165. Residues Gly171, Ser204, and 225-226 each bind substrate; that span reads GG.

This sequence belongs to the triosephosphate isomerase family. Homodimer.

It is found in the cytoplasm. The catalysed reaction is D-glyceraldehyde 3-phosphate = dihydroxyacetone phosphate. It functions in the pathway carbohydrate biosynthesis; gluconeogenesis. Its pathway is carbohydrate degradation; glycolysis; D-glyceraldehyde 3-phosphate from glycerone phosphate: step 1/1. In terms of biological role, involved in the gluconeogenesis. Catalyzes stereospecifically the conversion of dihydroxyacetone phosphate (DHAP) to D-glyceraldehyde-3-phosphate (G3P). This Prochlorococcus marinus (strain MIT 9312) protein is Triosephosphate isomerase.